We begin with the raw amino-acid sequence, 281 residues long: ATP phosphoribosyltransferase (281 aa).

The protein belongs to the ATP phosphoribosyltransferase family. Long subfamily. The cofactor is Mg(2+).

It is found in the cytoplasm. The catalysed reaction is 1-(5-phospho-beta-D-ribosyl)-ATP + diphosphate = 5-phospho-alpha-D-ribose 1-diphosphate + ATP. It functions in the pathway amino-acid biosynthesis; L-histidine biosynthesis; L-histidine from 5-phospho-alpha-D-ribose 1-diphosphate: step 1/9. Its activity is regulated as follows. Feedback inhibited by histidine. In terms of biological role, catalyzes the condensation of ATP and 5-phosphoribose 1-diphosphate to form N'-(5'-phosphoribosyl)-ATP (PR-ATP). Has a crucial role in the pathway because the rate of histidine biosynthesis seems to be controlled primarily by regulation of HisG enzymatic activity. This is ATP phosphoribosyltransferase from Natronomonas pharaonis (strain ATCC 35678 / DSM 2160 / CIP 103997 / JCM 8858 / NBRC 14720 / NCIMB 2260 / Gabara) (Halobacterium pharaonis).